Reading from the N-terminus, the 149-residue chain is Calmodulin (149 aa).

Position 2 is an N-acetylalanine (A2). EF-hand domains are found at residues 8–43, 44–79, 81–116, and 117–149; these read EQIA…LGQN, PTEA…KMKD, DSEE…LGEK, and LTDE…MTAK. Residues D21, D23, D25, T27, E32, D57, D59, N61, T63, E68, D94, D96, N98, Y100, and E105 each coordinate Ca(2+). K116 bears the N6,N6,N6-trimethyllysine mark. Residues D130, D132, D134, Q136, and E141 each coordinate Ca(2+).

The protein belongs to the calmodulin family.

Calmodulin acts as part of a calcium signal transduction pathway by mediating the control of a large number of enzymes, ion channels, aquaporins and other proteins through calcium-binding. Calcium-binding is required for the activation of calmodulin. Among the enzymes to be stimulated by the calmodulin-calcium complex are a number of protein kinases, such as myosin light-chain kinases and calmodulin-dependent protein kinase type II (CaMK2), and phosphatases. This Epinephelus akaara (Hong Kong grouper) protein is Calmodulin (calm).